The following is a 486-amino-acid chain: Glutamyl-tRNA(Gln) amidotransferase subunit A (486 aa).

Active-site charge relay system residues include Lys76 and Ser151. Ser175 acts as the Acyl-ester intermediate in catalysis.

It belongs to the amidase family. GatA subfamily. As to quaternary structure, heterotrimer of A, B and C subunits.

It catalyses the reaction L-glutamyl-tRNA(Gln) + L-glutamine + ATP + H2O = L-glutaminyl-tRNA(Gln) + L-glutamate + ADP + phosphate + H(+). Allows the formation of correctly charged Gln-tRNA(Gln) through the transamidation of misacylated Glu-tRNA(Gln) in organisms which lack glutaminyl-tRNA synthetase. The reaction takes place in the presence of glutamine and ATP through an activated gamma-phospho-Glu-tRNA(Gln). The protein is Glutamyl-tRNA(Gln) amidotransferase subunit A of Marinomonas sp. (strain MWYL1).